A 130-amino-acid chain; its full sequence is Small ribosomal subunit protein uS9 (130 aa).

The protein belongs to the universal ribosomal protein uS9 family.

The polypeptide is Small ribosomal subunit protein uS9 (Xylella fastidiosa (strain 9a5c)).